We begin with the raw amino-acid sequence, 197 residues long: Holliday junction branch migration complex subunit RuvA (197 aa).

The segment at methionine 1–leucine 64 is domain I. Residues threonine 65–glycine 143 are domain II. The interval lysine 144–leucine 152 is flexible linker. Residues leucine 152–isoleucine 197 form a domain III region.

This sequence belongs to the RuvA family. As to quaternary structure, homotetramer. Forms an RuvA(8)-RuvB(12)-Holliday junction (HJ) complex. HJ DNA is sandwiched between 2 RuvA tetramers; dsDNA enters through RuvA and exits via RuvB. An RuvB hexamer assembles on each DNA strand where it exits the tetramer. Each RuvB hexamer is contacted by two RuvA subunits (via domain III) on 2 adjacent RuvB subunits; this complex drives branch migration. In the full resolvosome a probable DNA-RuvA(4)-RuvB(12)-RuvC(2) complex forms which resolves the HJ.

The protein localises to the cytoplasm. In terms of biological role, the RuvA-RuvB-RuvC complex processes Holliday junction (HJ) DNA during genetic recombination and DNA repair, while the RuvA-RuvB complex plays an important role in the rescue of blocked DNA replication forks via replication fork reversal (RFR). RuvA specifically binds to HJ cruciform DNA, conferring on it an open structure. The RuvB hexamer acts as an ATP-dependent pump, pulling dsDNA into and through the RuvAB complex. HJ branch migration allows RuvC to scan DNA until it finds its consensus sequence, where it cleaves and resolves the cruciform DNA. The chain is Holliday junction branch migration complex subunit RuvA from Caldicellulosiruptor bescii (strain ATCC BAA-1888 / DSM 6725 / KCTC 15123 / Z-1320) (Anaerocellum thermophilum).